The sequence spans 446 residues: DNA repair protein RadA (446 aa).

The C4-type zinc finger occupies 10–27 (CSNCGNTSPKWSGQCFDC). Residue 91 to 98 (GDPGIGKS) coordinates ATP. Positions 250–254 (KNRFG) match the RadA KNRFG motif motif. The segment at 349-446 (EVYLSIAGGL…HLKDLKEIIR (98 aa)) is lon-protease-like.

Belongs to the RecA family. RadA subfamily.

In terms of biological role, DNA-dependent ATPase involved in processing of recombination intermediates, plays a role in repairing DNA breaks. Stimulates the branch migration of RecA-mediated strand transfer reactions, allowing the 3' invading strand to extend heteroduplex DNA faster. Binds ssDNA in the presence of ADP but not other nucleotides, has ATPase activity that is stimulated by ssDNA and various branched DNA structures, but inhibited by SSB. Does not have RecA's homology-searching function. The sequence is that of DNA repair protein RadA from Rickettsia felis (strain ATCC VR-1525 / URRWXCal2) (Rickettsia azadi).